The primary structure comprises 101 residues: Urease subunit beta (101 aa).

This sequence belongs to the urease beta subunit family. In terms of assembly, heterotrimer of UreA (gamma), UreB (beta) and UreC (alpha) subunits. Three heterotrimers associate to form the active enzyme.

It is found in the cytoplasm. The catalysed reaction is urea + 2 H2O + H(+) = hydrogencarbonate + 2 NH4(+). Its pathway is nitrogen metabolism; urea degradation; CO(2) and NH(3) from urea (urease route): step 1/1. The polypeptide is Urease subunit beta (Burkholderia mallei (strain NCTC 10247)).